The chain runs to 220 residues: Putative NAD(P)H nitroreductase SERP2086 (220 aa).

The protein belongs to the nitroreductase family. It depends on FMN as a cofactor.

The polypeptide is Putative NAD(P)H nitroreductase SERP2086 (Staphylococcus epidermidis (strain ATCC 35984 / DSM 28319 / BCRC 17069 / CCUG 31568 / BM 3577 / RP62A)).